The primary structure comprises 404 residues: SL1278 acyltransferase Chp1 (404 aa).

Topologically, residues 1-42 (MKCPGVSDCVATVRHDNVFAIAAGLRWSAAVPPLHKGDAVTK) are periplasmic. A helical membrane pass occupies residues 43-63 (LLVGAIAGGMLACAAILGDGI). Residues 64–404 (ASADTALIVP…RGLLPKGKKH (341 aa)) lie on the Cytoplasmic side of the membrane. Residues 104–325 (PTATRHVVSY…LRPIIDRAYQ (222 aa)) form the PE-PPE domain.

It belongs to the mycobacterial PPE family.

The protein localises to the cell inner membrane. The catalysed reaction is 3 3'-(hydroxy)phthioceranyl-2'-palmitoyl(stearoyl)-2-O-sulfo-alpha,alpha-trehalose = 3,6,6'-tris-(hydroxy)phthioceranyl-2-palmitoyl(stearoyl)-2'-sulfo-alpha-alpha-trehalose + 2 2'-palmitoyl/stearoyl-2-O-sulfo-alpha,alpha-trehalose.. Activity is potentiated by the SL-1 transporter MmpL8. Inhibited by the lipase inhibitor tetrahydrolipstatin (THL). Involved in the final steps of the cell wall sulfolipid-1 (SL-1) biosynthesis. Catalyzes two successive acylations of the precursor 2-palmitoyl-3-(C43)-phthioceranyl-alpha, alpha'-D-trehalose-2'-sulfate (SL1278) to yield the tetraacylated sulfolipid SL-1. The chain is SL1278 acyltransferase Chp1 from Mycobacterium tuberculosis (strain ATCC 25618 / H37Rv).